The primary structure comprises 227 residues: Cytidylate kinase (227 aa).

12–20 is a binding site for ATP; sequence GPSGAGKGT.

This sequence belongs to the cytidylate kinase family. Type 1 subfamily.

It is found in the cytoplasm. The enzyme catalyses CMP + ATP = CDP + ADP. It carries out the reaction dCMP + ATP = dCDP + ADP. In Erwinia tasmaniensis (strain DSM 17950 / CFBP 7177 / CIP 109463 / NCPPB 4357 / Et1/99), this protein is Cytidylate kinase.